The primary structure comprises 273 residues: Rhamnulose-1-phosphate aldolase (273 aa).

The active site involves E117. Residues H140, H142, and H211 each coordinate Zn(2+).

This sequence belongs to the aldolase class II family. RhaD subfamily. Zn(2+) is required as a cofactor.

Its subcellular location is the cytoplasm. The catalysed reaction is L-rhamnulose 1-phosphate = (S)-lactaldehyde + dihydroxyacetone phosphate. Its pathway is carbohydrate degradation; L-rhamnose degradation; glycerone phosphate from L-rhamnose: step 3/3. Catalyzes the reversible cleavage of L-rhamnulose-1-phosphate to dihydroxyacetone phosphate (DHAP) and L-lactaldehyde. This Listeria monocytogenes serotype 4a (strain HCC23) protein is Rhamnulose-1-phosphate aldolase.